The chain runs to 117 residues: Large ribosomal subunit protein bL20 (117 aa).

It belongs to the bacterial ribosomal protein bL20 family.

Functionally, binds directly to 23S ribosomal RNA and is necessary for the in vitro assembly process of the 50S ribosomal subunit. It is not involved in the protein synthesizing functions of that subunit. This Rickettsia canadensis (strain McKiel) protein is Large ribosomal subunit protein bL20.